We begin with the raw amino-acid sequence, 299 residues long: MLKIVSKPSFNRIALMGREGVEGVPETLAALKDYLVSLNREVILEENAAHMIDGSRLLTVPANDLKKKADLLIVVGGDGSLLNAAHIAVPQQLPVLGINRGRLGFLTDIPPNELTQISDILDGHYREEVRFLLEGTVEEGDEIVAQGIALNDIVLLPGNAPKMIEFDIFINDEFVCNQRADGLIITTPTGSTAYALSGGGPILHPQLNAMALVPMFPHTLSSRPIVVDAESQIKITISPENDVSPYVSNDGQERVSIKPGGNVYTRKYHYPLHLIHPTDYNYYDTLRRKLDWEKRAAKV.

Aspartate 78 functions as the Proton acceptor in the catalytic mechanism. NAD(+) is bound by residues 78–79 (DG), 151–152 (ND), lysine 162, arginine 179, aspartate 181, 192–197 (TAYALS), and glutamine 252.

Belongs to the NAD kinase family. The cofactor is a divalent metal cation.

The protein resides in the cytoplasm. The catalysed reaction is NAD(+) + ATP = ADP + NADP(+) + H(+). Functionally, involved in the regulation of the intracellular balance of NAD and NADP, and is a key enzyme in the biosynthesis of NADP. Catalyzes specifically the phosphorylation on 2'-hydroxyl of the adenosine moiety of NAD to yield NADP. In Coxiella burnetii (strain CbuG_Q212) (Coxiella burnetii (strain Q212)), this protein is NAD kinase.